The sequence spans 1159 residues: DNA-directed RNA polymerase subunit beta (1159 aa).

The protein belongs to the RNA polymerase beta chain family. In terms of assembly, the RNAP catalytic core consists of 2 alpha, 1 beta, 1 beta' and 1 omega subunit. When a sigma factor is associated with the core the holoenzyme is formed, which can initiate transcription.

It carries out the reaction RNA(n) + a ribonucleoside 5'-triphosphate = RNA(n+1) + diphosphate. Its function is as follows. DNA-dependent RNA polymerase catalyzes the transcription of DNA into RNA using the four ribonucleoside triphosphates as substrates. The chain is DNA-directed RNA polymerase subunit beta from Deinococcus radiodurans (strain ATCC 13939 / DSM 20539 / JCM 16871 / CCUG 27074 / LMG 4051 / NBRC 15346 / NCIMB 9279 / VKM B-1422 / R1).